The primary structure comprises 345 residues: Phosphoribosylformylglycinamidine cyclo-ligase (345 aa).

It belongs to the AIR synthase family.

It localises to the cytoplasm. It carries out the reaction 2-formamido-N(1)-(5-O-phospho-beta-D-ribosyl)acetamidine + ATP = 5-amino-1-(5-phospho-beta-D-ribosyl)imidazole + ADP + phosphate + H(+). It participates in purine metabolism; IMP biosynthesis via de novo pathway; 5-amino-1-(5-phospho-D-ribosyl)imidazole from N(2)-formyl-N(1)-(5-phospho-D-ribosyl)glycinamide: step 2/2. This Tolumonas auensis (strain DSM 9187 / NBRC 110442 / TA 4) protein is Phosphoribosylformylglycinamidine cyclo-ligase.